The primary structure comprises 204 residues: Matrix-remodeling-associated protein 7 (204 aa).

Residues 7 to 27 (LLAALPALATALALLLAWLLV) form a helical membrane-spanning segment. Residues 32–148 (AASPEPARAP…FSFKYSPGKL (117 aa)) are disordered. Over residues 38-47 (ARAPPEPAPP) the composition is skewed to pro residues. The span at 63–103 (EPAASPAGPEEPGEPAGLGELGEPAGPGEPEGPGDPAAAPA) shows a compositional bias: low complexity. A compositionally biased stretch (basic and acidic residues) spans 110–126 (VEARQEEEQDLDGEKGP). Position 191 is a phosphoserine (Ser191).

It localises to the membrane. The polypeptide is Matrix-remodeling-associated protein 7 (MXRA7) (Homo sapiens (Human)).